The following is a 247-amino-acid chain: Golgi-associated RAB2 interactor protein 5A (247 aa).

Positions 1–16 are enriched in pro residues; that stretch reads MGPPLWPDLQEPPPPG. Disordered regions lie at residues 1–22 and 60–92; these read MGPP…SQIR and GDIA…PTGR.

It belongs to the GARIN family. Interacts (via N-terminus) with RAB2B (in GTP-bound form).

It localises to the golgi apparatus. Its function is as follows. RAB2B effector protein which promotes cytosolic DNA-induced innate immune responses. Regulates IFN responses against DNA viruses by regulating the CGAS-STING signaling axis. The protein is Golgi-associated RAB2 interactor protein 5A of Homo sapiens (Human).